A 1126-amino-acid polypeptide reads, in one-letter code: Protein translocase subunit SecA (1126 aa).

ATP-binding positions include glutamine 175, 193–197 (GEGKT), and aspartate 694. The interval 1060–1126 (VQEAAPEKHE…KYKNCHGQGL (67 aa)) is disordered. Residues 1064-1080 (APEKHEDMSRYRTEKTD) show a composition bias toward basic and acidic residues. Positions 1110, 1112, 1121, and 1122 each coordinate Zn(2+).

This sequence belongs to the SecA family. Monomer and homodimer. Part of the essential Sec protein translocation apparatus which comprises SecA, SecYEG and auxiliary proteins SecDF. Other proteins may also be involved. The cofactor is Zn(2+).

The protein localises to the cell inner membrane. It is found in the cytoplasm. The enzyme catalyses ATP + H2O + cellular proteinSide 1 = ADP + phosphate + cellular proteinSide 2.. Functionally, part of the Sec protein translocase complex. Interacts with the SecYEG preprotein conducting channel. Has a central role in coupling the hydrolysis of ATP to the transfer of proteins into and across the cell membrane, serving as an ATP-driven molecular motor driving the stepwise translocation of polypeptide chains across the membrane. This Parabacteroides distasonis (strain ATCC 8503 / DSM 20701 / CIP 104284 / JCM 5825 / NCTC 11152) protein is Protein translocase subunit SecA.